The primary structure comprises 1435 residues: Dicer-like protein 2 (1435 aa).

A Helicase ATP-binding domain is found at 54 to 234 (MLSESLRQNI…LEVLEINLNA (181 aa)). 67–74 (MDTGSGKT) lines the ATP pocket. Positions 175 to 178 (DEAH) match the DEAH box motif. Residues 400 to 564 (KLIDFLVLEH…ENKRALEHIQ (165 aa)) enclose the Helicase C-terminal domain. The Dicer dsRNA-binding fold domain maps to 591–684 (ARNHLSHFCG…MPAHHHIDDE (94 aa)). RNase III domains lie at 956–1099 (ANEL…IDGG) and 1141–1323 (LSEI…IDSQ). 3 residues coordinate Mg(2+): glutamate 1178, aspartate 1309, and glutamate 1312.

The protein belongs to the helicase family. Dicer subfamily. The cofactor is Mg(2+). Mn(2+) serves as cofactor.

Dicer-like endonuclease involved in cleaving double-stranded RNA in the RNA interference (RNAi) pathway. Produces 21 to 25 bp dsRNAs (siRNAs) which target the selective destruction of homologous RNAs leading to sequence-specific suppression of gene expression, called post-transcriptional gene silencing (PTGS). Part of a broad host defense response against viral infection and transposons. The chain is Dicer-like protein 2 (DCL2) from Coccidioides immitis (strain RS) (Valley fever fungus).